We begin with the raw amino-acid sequence, 38 residues long: Photosystem II reaction center protein L (38 aa).

The helical transmembrane segment at 17 to 37 threads the bilayer; the sequence is SLYWGLLLIFVLAVSFSNYFF.

Belongs to the PsbL family. PSII is composed of 1 copy each of membrane proteins PsbA, PsbB, PsbC, PsbD, PsbE, PsbF, PsbH, PsbI, PsbJ, PsbK, PsbL, PsbM, PsbT, PsbX, PsbY, PsbZ, Psb30/Ycf12, at least 3 peripheral proteins of the oxygen-evolving complex and a large number of cofactors. It forms dimeric complexes.

It is found in the plastid membrane. Its function is as follows. One of the components of the core complex of photosystem II (PSII). PSII is a light-driven water:plastoquinone oxidoreductase that uses light energy to abstract electrons from H(2)O, generating O(2) and a proton gradient subsequently used for ATP formation. It consists of a core antenna complex that captures photons, and an electron transfer chain that converts photonic excitation into a charge separation. This subunit is found at the monomer-monomer interface and is required for correct PSII assembly and/or dimerization. The sequence is that of Photosystem II reaction center protein L from Aneura mirabilis (Parasitic liverwort).